The chain runs to 255 residues: 5'-nucleotidase SurE (255 aa).

A divalent metal cation contacts are provided by Asp8, Asp9, Ser39, and Asn91.

It belongs to the SurE nucleotidase family. It depends on a divalent metal cation as a cofactor.

It localises to the cytoplasm. It catalyses the reaction a ribonucleoside 5'-phosphate + H2O = a ribonucleoside + phosphate. Its function is as follows. Nucleotidase that shows phosphatase activity on nucleoside 5'-monophosphates. In Acinetobacter baumannii (strain ATCC 17978 / DSM 105126 / CIP 53.77 / LMG 1025 / NCDC KC755 / 5377), this protein is 5'-nucleotidase SurE.